A 145-amino-acid chain; its full sequence is Sporulation-specific cell division protein Francci3_3418 (145 aa).

Belongs to the SsgA family.

It localises to the cell septum. In terms of biological role, involved in sporulation-specific cell division. The chain is Sporulation-specific cell division protein Francci3_3418 from Frankia casuarinae (strain DSM 45818 / CECT 9043 / HFP020203 / CcI3).